We begin with the raw amino-acid sequence, 473 residues long: Double-stranded RNA-binding protein 7 (473 aa).

Over residues 1–10 (MDMPPTPLPP) the composition is skewed to pro residues. The disordered stretch occupies residues 1 to 22 (MDMPPTPLPPETANTSPAPNGA). DRBM domains follow at residues 33 to 102 (VFKS…EIVK) and 118 to 185 (LCKN…AIQG). Basic and acidic residues-rich tracts occupy residues 286–307 (KRVE…ENQH), 317–327 (DEARVEQEPSR), and 416–427 (VDARVVKEESPR). 2 disordered regions span residues 286–329 (KRVE…SRDI) and 393–473 (QLNE…MSEE). Residues 433 to 450 (EATNMKETPKNSAVCNSP) are compositionally biased toward polar residues.

Its function is as follows. Binds double-stranded RNA. The sequence is that of Double-stranded RNA-binding protein 7 (DRB7) from Oryza sativa subsp. japonica (Rice).